A 178-amino-acid chain; its full sequence is Fucolectin-1 (178 aa).

The signal sequence occupies residues 1–20; that stretch reads MKVKTIMLLFQILAISTIKS. The interval 29 to 178 is F5/8 type C-like; it reads QENVAVRGKA…VEVNALLPVN (150 aa). Ca(2+) contacts are provided by aspartate 59, asparagine 61, and serine 70. 3 disulfides stabilise this stretch: cysteine 71/cysteine 167, cysteine 103/cysteine 104, and cysteine 129/cysteine 145. Histidine 73 and arginine 100 together coordinate alpha-L-fucose. Residues 100–102 carry the Cell attachment site motif; that stretch reads RGD. Arginine 107 lines the alpha-L-fucose pocket. Ca(2+) contacts are provided by cysteine 167 and glutamate 168.

It belongs to the fucolectin family. Homotrimer. In terms of tissue distribution, parenchymal hepatocytes.

It localises to the secreted. The protein resides in the extracellular space. Acts as a defensive agent. Recognizes blood group fucosylated oligosaccharides including A, B, H and Lewis B-type antigens. Does not recognize Lewis A antigen and has low affinity for monovalent haptens. In Anguilla japonica (Japanese eel), this protein is Fucolectin-1.